A 41-amino-acid polypeptide reads, in one-letter code: Photosystem II reaction center protein Y (41 aa).

The helical transmembrane segment at 5–23 (VLIVLAPVIIAGSWALFNI) threads the bilayer.

It belongs to the PsbY family. PSII is composed of 1 copy each of membrane proteins PsbA, PsbB, PsbC, PsbD, PsbE, PsbF, PsbH, PsbI, PsbJ, PsbK, PsbL, PsbM, PsbT, PsbX, PsbY, PsbZ, Psb30/Ycf12, peripheral proteins PsbO, CyanoQ (PsbQ), PsbU, PsbV and a large number of cofactors. It forms dimeric complexes.

The protein localises to the cellular thylakoid membrane. In terms of biological role, loosely associated component of the core of photosystem II (PSII), it is not always seen in crystals. PSII is a light-driven water plastoquinone oxidoreductase, using light energy to abstract electrons from H(2)O, generating a proton gradient subsequently used for ATP formation. The sequence is that of Photosystem II reaction center protein Y from Gloeothece citriformis (strain PCC 7424) (Cyanothece sp. (strain PCC 7424)).